The sequence spans 249 residues: Isoamyl acetate-hydrolyzing esterase 1 homolog (249 aa).

S24 (nucleophile) is an active-site residue. K63 is modified (N6-succinyllysine). The active-site Proton donor is D197. H200 functions as the Proton acceptor in the catalytic mechanism.

Belongs to the 'GDSL' lipolytic enzyme family. IAH1 subfamily.

Probable lipase. This chain is Isoamyl acetate-hydrolyzing esterase 1 homolog (Iah1), found in Rattus norvegicus (Rat).